A 53-amino-acid polypeptide reads, in one-letter code: Light-harvesting protein B-800/820 alpha chain (53 aa).

At 1 to 14 (MNQGKIWTVVNPAV) the chain is on the cytoplasmic side. Residues 15–35 (GLPLLLGSVAITALLVHLAVL) form a helical membrane-spanning segment. Histidine 31 is a binding site for a bacteriochlorophyll. The Periplasmic portion of the chain corresponds to 36–53 (THTTWFPAFTQGGLKKAA).

Belongs to the antenna complex alpha subunit family. In terms of assembly, the core complex is formed by different alpha and beta chains, binding bacteriochlorophyll molecules, and arranged most probably in tetrameric structures disposed around the reaction center. The non-pigmented gamma chains may constitute additional components.

The protein localises to the cell inner membrane. Its function is as follows. Antenna complexes are light-harvesting systems, which transfer the excitation energy to the reaction centers. This is Light-harvesting protein B-800/820 alpha chain from Rhodoblastus acidophilus (Rhodopseudomonas acidophila).